The chain runs to 227 residues: Cytidylate kinase (227 aa).

12–20 is a binding site for ATP; that stretch reads GPSGAGKGT.

It belongs to the cytidylate kinase family. Type 1 subfamily.

It is found in the cytoplasm. The enzyme catalyses CMP + ATP = CDP + ADP. It carries out the reaction dCMP + ATP = dCDP + ADP. This is Cytidylate kinase from Shigella boydii serotype 18 (strain CDC 3083-94 / BS512).